The following is a 202-amino-acid chain: Holliday junction branch migration complex subunit RuvA (202 aa).

The segment at 1-63 is domain I; that stretch reads MIAFLSGRVV…EDSLTLFGFA (63 aa). Residues 64-142 are domain II; that stretch reads DDDERDTFER…EPGGDTAATP (79 aa). The segment at 143–152 is flexible linker; sequence EQSAAAAPRN. The segment at 152 to 202 is domain III; the sequence is NWRAQVVSGLVNLGWSTREAEAAADAVAAEAGEQPDVAALLRSALRRLSRA.

It belongs to the RuvA family. As to quaternary structure, homotetramer. Forms an RuvA(8)-RuvB(12)-Holliday junction (HJ) complex. HJ DNA is sandwiched between 2 RuvA tetramers; dsDNA enters through RuvA and exits via RuvB. An RuvB hexamer assembles on each DNA strand where it exits the tetramer. Each RuvB hexamer is contacted by two RuvA subunits (via domain III) on 2 adjacent RuvB subunits; this complex drives branch migration. In the full resolvosome a probable DNA-RuvA(4)-RuvB(12)-RuvC(2) complex forms which resolves the HJ.

It localises to the cytoplasm. In terms of biological role, the RuvA-RuvB-RuvC complex processes Holliday junction (HJ) DNA during genetic recombination and DNA repair, while the RuvA-RuvB complex plays an important role in the rescue of blocked DNA replication forks via replication fork reversal (RFR). RuvA specifically binds to HJ cruciform DNA, conferring on it an open structure. The RuvB hexamer acts as an ATP-dependent pump, pulling dsDNA into and through the RuvAB complex. HJ branch migration allows RuvC to scan DNA until it finds its consensus sequence, where it cleaves and resolves the cruciform DNA. The protein is Holliday junction branch migration complex subunit RuvA of Thermobifida fusca (strain YX).